Here is a 591-residue protein sequence, read N- to C-terminus: MKYILVTGGVISGIGKGIIASSVGTILKSCGLHVTSIKIDPYINIDAGTFSPYEHGEVFVLDDGGEVDLDLGNYERFLDIRLTKDNNLTTGKIYQYVINKERKGDYLGKTVQVVPHITDAIQEWVMRQALIPVDEDGLEPQVCVIELGGTVGDIESMPFIEAFRQFQFKVKRENFCNIHVSLVPQPSSTGEQKTKPTQNSVRELRGLGLSPDLVVCRCSNPLDTSVKEKISMFCHVEPEQVICVHDVSSIYRVPLLLEEQGVVDYFLRRLDLPIERQPRKMLMKWKEMADRYDRLLETCSIALVGKYTKFSDSYASVIKALEHSALAINHKLEIKYIDSADLEPITSQEEPVRYHEAWQKLCSAHGVLVPGGFGVRGTEGKIQAIAWARNQKKPFLGVCLGMQLAVVEFSRNVLGWQDANSTEFDPTTSHPVVVDMPEHNPGQMGGTMRLGKRRTLFQTKNSVMRKLYGDADYLEERHRHRFEVNPVWKKCLEEQGLKFVGQDVEGERMEIVELEDHPFFVGVQYHPEFLSRPIKPSPPYFGLLLASVGRLSHYLQKGCRLSPRDTYSDRSGSSSPDSEITELKFPSINHD.

Position 100 is an N6-acetyllysine (lysine 100). The Glutamine amidotransferase type-1 domain maps to 300 to 554 (SIALVGKYTK…LASVGRLSHY (255 aa)). Residues cysteine 399, histidine 526, and glutamate 528 each act as for GATase activity in the active site. 8 positions are modified to phosphoserine: serine 562, serine 568, serine 571, serine 573, serine 574, serine 575, serine 578, and serine 587. Residues 562-591 (SPRDTYSDRSGSSSPDSEITELKFPSINHD) are disordered. Positions 569-578 (DRSGSSSPDS) are enriched in low complexity.

It belongs to the CTP synthase family. In terms of tissue distribution, widely expressed.

It is found in the cytoplasm. The protein resides in the cytosol. It carries out the reaction UTP + L-glutamine + ATP + H2O = CTP + L-glutamate + ADP + phosphate + 2 H(+). It functions in the pathway pyrimidine metabolism; CTP biosynthesis via de novo pathway; CTP from UDP: step 2/2. Activated by GTP and inhibited by CTP. Functionally, this enzyme is involved in the de novo synthesis of CTP, a precursor of DNA, RNA and phospholipids. Catalyzes the ATP-dependent amination of UTP to CTP with either L-glutamine or ammonia as a source of nitrogen. This enzyme and its product, CTP, play a crucial role in the proliferation of activated lymphocytes and therefore in immunity. This Homo sapiens (Human) protein is CTP synthase 1.